The primary structure comprises 211 residues: Glutathione S-transferase class-mu 28 kDa isozyme (211 aa).

A2 carries the post-translational modification N-acetylalanine. The 83-residue stretch at 4–86 (EHIKVIYFDG…YMAKKHHMMG (83 aa)) folds into the GST N-terminal domain. Glutathione contacts are provided by residues Y10, 10–11 (YF), R16, 41–45 (WPKIK), L53, 55–56 (AV), and 70–71 (ES). In terms of domain architecture, GST C-terminal spans 88–211 (TDEEYYSVEK…YLSNRPATPF (124 aa)).

It belongs to the GST superfamily. Mu family. Homodimer. In the adult, expressed in excretory epithelial cells but absent from the caecal epithelium and flame cells. Also expressed in the tegument and its extensions into the parenchyma. In the schistosomulum, expressed in the tegument and associated structures. Not expressed in digestive tract, reproductive organs or muscles (at protein level).

It catalyses the reaction RX + glutathione = an S-substituted glutathione + a halide anion + H(+). Its function is as follows. Conjugation of reduced glutathione to a wide number of exogenous and endogenous hydrophobic electrophiles. In terms of biological role, GST isoenzymes appear to play a central role in the parasite detoxification system. Other functions are also suspected including a role in increasing the solubility of haematin in the parasite gut. This chain is Glutathione S-transferase class-mu 28 kDa isozyme (GST28), found in Schistosoma mansoni (Blood fluke).